A 267-amino-acid chain; its full sequence is MNRIEQQFKKSPAYVAYLTAGDGGLERSLESLLALAKGGVNILEVGVPFSDPVADGPVIQEASIRALAQGTTLHDVLTLITSFRQHSEIPIILFTYFNPLLAAGDKIYQQMKSAGVDGCLVVDLPVEEAAPHLTACKTAKIAPILLISPSTTQERLKKINEHGEGMLYYVCRPGTTGVRATLPENFPAKMNQIKSMTSLPIVTGFGIANRKMAAQALQYADGFVIGSLFVKAIAEGISKNALTRLAQSLNPHYPNLRLITPFRKKTF.

Residues Glu44 and Asp55 each act as proton acceptor in the active site.

Belongs to the TrpA family. Tetramer of two alpha and two beta chains.

The enzyme catalyses (1S,2R)-1-C-(indol-3-yl)glycerol 3-phosphate + L-serine = D-glyceraldehyde 3-phosphate + L-tryptophan + H2O. It functions in the pathway amino-acid biosynthesis; L-tryptophan biosynthesis; L-tryptophan from chorismate: step 5/5. The alpha subunit is responsible for the aldol cleavage of indoleglycerol phosphate to indole and glyceraldehyde 3-phosphate. The chain is Tryptophan synthase alpha chain from Coxiella burnetii (strain Dugway 5J108-111).